An 885-amino-acid chain; its full sequence is Leucine--tRNA ligase (885 aa).

Positions 43-53 (PYTSGQLHMGH) match the 'HIGH' region motif. Residues 571-575 (KMSKS) carry the 'KMSKS' region motif. Lysine 574 is a binding site for ATP. A disordered region spans residues 866 to 885 (SVANKAEPGRPAIHVDEADD).

It belongs to the class-I aminoacyl-tRNA synthetase family.

It is found in the cytoplasm. It catalyses the reaction tRNA(Leu) + L-leucine + ATP = L-leucyl-tRNA(Leu) + AMP + diphosphate. This is Leucine--tRNA ligase from Halobacterium salinarum (strain ATCC 700922 / JCM 11081 / NRC-1) (Halobacterium halobium).